Consider the following 497-residue polypeptide: MASLLHKFLENASGKKGQDLASTAYLAALDHLLHSFPSIGKSVIDELKSQRSRLKMIASENYSSISVQLAMGNLLTDKYCEGSPFKRFYSCCENVDAIEWECAETAKELFGAESAFVQPHSGADANLLAIMAIITQKIQGPAVKRLGYKTINDLTDKEYAELKAEIGSHVCLGPSLNSGGHLTHGNVRLNVMSKLMRCLPYEVSKKTELFDYAEIARLVRTHKPTVLIAGYSSYSRRLNFSILKQIADDCGAVLWVDMAHFAGLVAGGVFVEEENPIPFADIVTTTTHKTLRGPRGGLMLSTKEYEGMINRACPLMMGGPLPHVIAAKAIALKEALTVDFKKYAHQVVDNARTLAEHFQKHGLRLLTGGTDNHMLIIDLTSLGIPGNVAEDILSSVGIAVNRNTIPSDSEGVWRTSGIRLGTPALTSLGMGSDEMEEVANIIVKVLRNITLRRNADDNFSKSEGELPENIAQEAKARVADLLARFPLYPEIDLETLV.

Residues L176 and G180–L182 contribute to the (6S)-5,6,7,8-tetrahydrofolate site. K289 carries the N6-(pyridoxal phosphate)lysine modification.

It belongs to the SHMT family. As to quaternary structure, homodimer. It depends on pyridoxal 5'-phosphate as a cofactor.

It localises to the cytoplasm. It catalyses the reaction (6R)-5,10-methylene-5,6,7,8-tetrahydrofolate + glycine + H2O = (6S)-5,6,7,8-tetrahydrofolate + L-serine. It functions in the pathway one-carbon metabolism; tetrahydrofolate interconversion. Its pathway is amino-acid biosynthesis; glycine biosynthesis; glycine from L-serine: step 1/1. Its function is as follows. Catalyzes the reversible interconversion of serine and glycine with tetrahydrofolate (THF) serving as the one-carbon carrier. This reaction serves as the major source of one-carbon groups required for the biosynthesis of purines, thymidylate, methionine, and other important biomolecules. Also exhibits THF-independent aldolase activity toward beta-hydroxyamino acids, producing glycine and aldehydes, via a retro-aldol mechanism. This is Serine hydroxymethyltransferase from Chlamydia felis (strain Fe/C-56) (Chlamydophila felis).